Consider the following 121-residue polypeptide: Small ribosomal subunit protein uS11 (121 aa).

Belongs to the universal ribosomal protein uS11 family. Part of the 30S ribosomal subunit. Interacts with proteins S7 and S18. Binds to IF-3.

Its function is as follows. Located on the platform of the 30S subunit, it bridges several disparate RNA helices of the 16S rRNA. Forms part of the Shine-Dalgarno cleft in the 70S ribosome. The chain is Small ribosomal subunit protein uS11 from Ureaplasma parvum serovar 3 (strain ATCC 27815 / 27 / NCTC 11736).